Reading from the N-terminus, the 213-residue chain is Large ribosomal subunit protein uL1 (213 aa).

Belongs to the universal ribosomal protein uL1 family. Part of the 50S ribosomal subunit.

Binds directly to 23S rRNA. Probably involved in E site tRNA release. In terms of biological role, protein L1 is also a translational repressor protein, it controls the translation of its operon by binding to its mRNA. The protein is Large ribosomal subunit protein uL1 of Methanococcus maripaludis (strain C6 / ATCC BAA-1332).